Consider the following 482-residue polypeptide: MIKGTGHMIVNIANDRGMSIDSIRKTIKESVLIAYKKYFGSNENAFIKFDDDTGDLSVYAKKKIVKEVKDSLLEILEKDISKENIVEGDYAYIEINPKVFDRLSIQVAKQRTKNDLQGIEDNEILSEFKSKLNKVVIGYVQQNRNGDLYVNLGNTDGIIPKKYQSPREVYNLNDKIRVLVYNVKKGKNGIEVILSRTHPKFIEELLALEIPEIEEGIIKIHKIVRDPGYRIKVAVYSEKEEIDPVGPCIGQKGVRIQSIIKELEGEKIDIIPYSKDIKEFIKDSLTPSKIEHVYILDEDLHKALVVVSDDQLSLAIGKMGQNVRLANRLLDWAIDVKTSSQFAEMKANSEFKQETLEMFDKVMQDVVEEEQFEEISKISDLKLLDPSVISNLSKEGFDDINNFLQADEGVLFNLGVSYEKQEEINKILKEGMIIIANDNDESMEKVEEDEELLCPECGVVINENMTSCPGCKIGLSFEFEEE.

Residues 133–197 (NKVVIGYVQQ…NGIEVILSRT (65 aa)) form the S1 motif domain. A KH domain is found at 300 to 446 (LHKALVVVSD…NDNDESMEKV (147 aa)).

The protein belongs to the NusA family. Monomer. Binds directly to the core enzyme of the DNA-dependent RNA polymerase and to nascent RNA.

The protein resides in the cytoplasm. Functionally, participates in both transcription termination and antitermination. The chain is Transcription termination/antitermination protein NusA from Borreliella burgdorferi (strain ATCC 35210 / DSM 4680 / CIP 102532 / B31) (Borrelia burgdorferi).